Here is a 39-residue protein sequence, read N- to C-terminus: Photosystem II reaction center protein J (39 aa).

Residues 7–27 traverse the membrane as a helical segment; sequence IPLWIVAVVVGLGVVTVVGLF.

It belongs to the PsbJ family. In terms of assembly, PSII is composed of 1 copy each of membrane proteins PsbA, PsbB, PsbC, PsbD, PsbE, PsbF, PsbH, PsbI, PsbJ, PsbK, PsbL, PsbM, PsbT, PsbX, PsbY, PsbZ, Psb30/Ycf12, peripheral proteins PsbO, CyanoQ (PsbQ), PsbU, PsbV and a large number of cofactors. It forms dimeric complexes.

Its subcellular location is the cellular thylakoid membrane. One of the components of the core complex of photosystem II (PSII). PSII is a light-driven water:plastoquinone oxidoreductase that uses light energy to abstract electrons from H(2)O, generating O(2) and a proton gradient subsequently used for ATP formation. It consists of a core antenna complex that captures photons, and an electron transfer chain that converts photonic excitation into a charge separation. This is Photosystem II reaction center protein J from Synechococcus sp. (strain JA-3-3Ab) (Cyanobacteria bacterium Yellowstone A-Prime).